Here is a 265-residue protein sequence, read N- to C-terminus: 3-methyl-2-oxobutanoate hydroxymethyltransferase (265 aa).

The Mg(2+) site is built by D45 and D84. Residues 45–46 (DS), D84, and K112 contribute to the 3-methyl-2-oxobutanoate site. Mg(2+) is bound at residue E114. Catalysis depends on E181, which acts as the Proton acceptor.

It belongs to the PanB family. Homodecamer; pentamer of dimers. The cofactor is Mg(2+).

It is found in the cytoplasm. It carries out the reaction 3-methyl-2-oxobutanoate + (6R)-5,10-methylene-5,6,7,8-tetrahydrofolate + H2O = 2-dehydropantoate + (6S)-5,6,7,8-tetrahydrofolate. It functions in the pathway cofactor biosynthesis; (R)-pantothenate biosynthesis; (R)-pantoate from 3-methyl-2-oxobutanoate: step 1/2. Catalyzes the reversible reaction in which hydroxymethyl group from 5,10-methylenetetrahydrofolate is transferred onto alpha-ketoisovalerate to form ketopantoate. This is 3-methyl-2-oxobutanoate hydroxymethyltransferase from Wigglesworthia glossinidia brevipalpis.